We begin with the raw amino-acid sequence, 985 residues long: Ras and Rab interactor 3 (985 aa).

The tract at residues 1–24 is disordered; it reads MIRHAGAPARGDPTGPVPVVGKGE. The 96-residue stretch at 63 to 158 folds into the SH2 domain; the sequence is WLQLSLGQAE…LLPFTLRLPQ (96 aa). Disordered stretches follow at residues 183-202, 251-293, and 315-531; these read SLNP…DRAP, QPPL…QPCS, and PPVP…KGSL. The segment covering 189-201 has biased composition (basic and acidic residues); the sequence is ERGKPAEPPRDRA. Pro residues-rich tracts occupy residues 278 to 288 and 315 to 336; these read RRPPPPPPVLP and PPVP…PNQP. Basic and acidic residues predominate over residues 424 to 442; sequence DTPRESTEQGQDTEVKASD. Residues 587–732 are interaction with RAB5B; that stretch reads FSSMFHAFLS…TTTDLGVTTS (146 aa). In terms of domain architecture, VPS9 spans 703-846; that stretch reads HSKDGSLQQL…IKSYDKITVT (144 aa). Residues 877–963 form the Ras-associating domain; that stretch reads QDFICVSYLE…RDFHFVYRPL (87 aa).

It belongs to the RIN (Ras interaction/interference) family. Interacts with CD2AP, RAB5B, RAB31 and BIN1. As to expression, widely expressed.

Its subcellular location is the cytoplasm. The protein resides in the cytoplasmic vesicle. The protein localises to the early endosome. Ras effector protein that functions as a guanine nucleotide exchange (GEF) for RAB5B and RAB31, by exchanging bound GDP for free GTP. Required for normal RAB31 function. The protein is Ras and Rab interactor 3 (RIN3) of Homo sapiens (Human).